The chain runs to 424 residues: Type II methyltransferase M.BspRI (424 aa).

Residues 58–408 (FNVLSLFCGA…KSIAQFAADY (351 aa)) form the SAM-dependent MTase C5-type domain. Cysteine 156 serves as the catalytic S-methylcysteine intermediate. Cysteine 181 carries the post-translational modification S-methylcysteine; by autocatalysis.

Belongs to the class I-like SAM-binding methyltransferase superfamily. C5-methyltransferase family. Monomer. In the absence of DNA, can self-methylate two cysteine residues.

The catalysed reaction is a 2'-deoxycytidine in DNA + S-adenosyl-L-methionine = a 5-methyl-2'-deoxycytidine in DNA + S-adenosyl-L-homocysteine + H(+). Functionally, a methylase, recognizes the double-stranded sequence 5'-GGCC-3', methylates C-3 on both strands, and protects the DNA from cleavage by the BspRI endonuclease. This chain is Type II methyltransferase M.BspRI (bspRIM), found in Lysinibacillus sphaericus (Bacillus sphaericus).